The sequence spans 390 residues: Ribosomal RNA small subunit methyltransferase H (390 aa).

S-adenosyl-L-methionine contacts are provided by residues 47-49 (GGH), Asp66, Phe93, Asp122, and Gln129. The segment at 282–390 (SKTPPGLPID…SHREDVEGEQ (109 aa)) is disordered. Basic and acidic residues predominate over residues 305 to 316 (GSEKADEQENNK). Over residues 348-358 (SGSSTTYSARS) the composition is skewed to polar residues. Composition is skewed to basic and acidic residues over residues 360–372 (SRHE…REHL) and 381–390 (SHREDVEGEQ).

Belongs to the methyltransferase superfamily. RsmH family.

The protein localises to the cytoplasm. It carries out the reaction cytidine(1402) in 16S rRNA + S-adenosyl-L-methionine = N(4)-methylcytidine(1402) in 16S rRNA + S-adenosyl-L-homocysteine + H(+). Functionally, specifically methylates the N4 position of cytidine in position 1402 (C1402) of 16S rRNA. The chain is Ribosomal RNA small subunit methyltransferase H from Corynebacterium kroppenstedtii (strain DSM 44385 / JCM 11950 / CIP 105744 / CCUG 35717).